A 527-amino-acid chain; its full sequence is Low-affinity Na(+)/H(+) antiporter NhaS1 (527 aa).

A run of 11 helical transmembrane segments spans residues 18 to 38, 41 to 61, 94 to 114, 126 to 146, 169 to 189, 196 to 216, 240 to 260, 276 to 296, 311 to 331, 352 to 372, and 380 to 400; these read FLIV…VPIL, IPYT…DVKL, WFPI…GIAF, IAFL…IALF, VAVV…TFDL, FVTV…SLSL, ILAE…GMVL, IVSI…FLLI, LILI…FGLS, TVLW…LSVP, and AIID…GLTT.

This sequence belongs to the monovalent cation:proton antiporter 1 (CPA1) transporter (TC 2.A.36) family.

It is found in the cell membrane. In terms of biological role, na(+)/H(+) antiporter that extrudes sodium in exchange for external protons. Might be able to function at relatively high concentrations of Na(+) ions. Also has Li(+)/H(+) antiport activity under K(+)-rich conditions, but it might not have any physiological relevance. The protein is Low-affinity Na(+)/H(+) antiporter NhaS1 (nhaS1) of Synechocystis sp. (strain ATCC 27184 / PCC 6803 / Kazusa).